A 735-amino-acid polypeptide reads, in one-letter code: Muskelin (735 aa).

At A2 the chain carries N-acetylalanine. The 33-residue stretch at 172 to 204 (REQEAIRLCLKHFRQHNYTEAFESLQKKTKIAL) folds into the LisH domain. The region spanning 206 to 258 (HPMLTDMHDKLVLKGDFDACEELIEKAVNDGLFNQYISQQEYKPRWSQIIPKS) is the CTLH domain. Kelch repeat units follow at residues 284–330 (TVYL…SCHK), 339–391 (QIYT…FDHQ), 400–458 (MIYT…SRIG), 469–515 (CLYV…TGFT), 526–578 (EIHV…SLQE), and 597–651 (VHYL…AQMD). Residues 701 to 735 (DHTYAQRTQLFDTLVNFFPDSMTPPKGNLVDLITL) form an important for location in the cytosol region.

As to quaternary structure, homodimer; may form higher oligomers. Identified in the CTLH complex that contains GID4, RANBP9 and/or RANBP10, MKLN1, MAEA, RMND5A (or alternatively its paralog RMND5B), GID8, ARMC8, WDR26 and YPEL5. Within this complex, MAEA, RMND5A (or alternatively its paralog RMND5B), GID8, WDR26, and RANBP9 and/or RANBP10 form the catalytic core, while GID4, MKLN1, ARMC8 and YPEL5 have ancillary roles. Interacts with RANBP9. Part of a complex consisting of RANBP9, MKLN1 and GID8. Interacts with GABRA1. Interacts with the C-terminal tail of PTGER3. In terms of tissue distribution, detected in brain, especially in hippocampus and cerebellum (at protein level).

It localises to the cytoplasm. Its subcellular location is the cytosol. It is found in the nucleus. The protein resides in the nucleoplasm. The protein localises to the cell projection. It localises to the ruffle. Its subcellular location is the cell cortex. It is found in the synapse. The protein resides in the postsynapse. Its function is as follows. Component of the CTLH E3 ubiquitin-protein ligase complex that selectively accepts ubiquitin from UBE2H and mediates ubiquitination and subsequent proteasomal degradation of the transcription factor HBP1. Required for internalization of the GABA receptor GABRA1 from the cell membrane via endosomes and subsequent GABRA1 degradation. Acts as a mediator of cell spreading and cytoskeletal responses to the extracellular matrix component THBS1. This is Muskelin (Mkln1) from Mus musculus (Mouse).